Consider the following 118-residue polypeptide: Small ribosomal subunit protein mS41 (118 aa).

A mitochondrion-targeting transit peptide spans 1-24 (MLRVVAKAQYPAAVRCFSTSHAAF).

The protein belongs to the mitochondrion-specific ribosomal protein mS41 family.

It is found in the mitochondrion. Functionally, involved in telomere length regulation. In Yarrowia lipolytica (strain CLIB 122 / E 150) (Yeast), this protein is Small ribosomal subunit protein mS41 (FYV4).